Reading from the N-terminus, the 233-residue chain is MSEAKNLLAQGLWKNNSALVQLLGLCPLLAVSSTATNALGLGLATTLVLVCTNTAVSALRRWVPSEIRIPIYVMIIASVVSTVQMLINAYAFGLYQSLGIFIPLIVTNCIVIGRAEAYAAKNPVGLSALDGFAMGMGATCALFVLGALREILGNGTLFDGADMLLGSWATVLRIDILHLDTPFLLAMLPPGAFIGLGLLLAGKYVIDEKMKARKANTRVSVPQLQDGYAEKAL.

6 consecutive transmembrane segments (helical) span residues 18 to 38 (ALVQ…ATNA), 39 to 59 (LGLG…VSAL), 69 to 89 (IPIY…LINA), 92 to 112 (FGLY…CIVI), 128 to 148 (ALDG…LGAL), and 182 to 202 (PFLL…LLAG).

This sequence belongs to the NqrDE/RnfAE family. As to quaternary structure, the complex is composed of six subunits: RnfA, RnfB, RnfC, RnfD, RnfE and RnfG.

The protein resides in the cell inner membrane. Its function is as follows. Part of a membrane-bound complex that couples electron transfer with translocation of ions across the membrane. The protein is Ion-translocating oxidoreductase complex subunit E of Yersinia pestis bv. Antiqua (strain Angola).